The primary structure comprises 568 residues: Oxygen-dependent choline dehydrogenase (568 aa).

Asp6–Glu35 contacts FAD. The Proton acceptor role is filled by His470.

This sequence belongs to the GMC oxidoreductase family. FAD serves as cofactor.

It catalyses the reaction choline + A = betaine aldehyde + AH2. The catalysed reaction is betaine aldehyde + NAD(+) + H2O = glycine betaine + NADH + 2 H(+). It participates in amine and polyamine biosynthesis; betaine biosynthesis via choline pathway; betaine aldehyde from choline (cytochrome c reductase route): step 1/1. In terms of biological role, involved in the biosynthesis of the osmoprotectant glycine betaine. Catalyzes the oxidation of choline to betaine aldehyde and betaine aldehyde to glycine betaine at the same rate. This Photobacterium profundum (strain SS9) protein is Oxygen-dependent choline dehydrogenase.